The primary structure comprises 403 residues: MKLPIYLDYSSTTPVDPRVAEKMMQYLTPGGEFGNPASRSHRFGWHAEEAVDVAREQIADLISGDPREIVFTSGATESNNLAIKGAAHFYVKKGKHIITAKTEHKAVLDTCRQLEREGYEVTYLDPKEDGIVTPQQLKEVLRPDTVLVSLMHVNNEIGVIQDIAGFGELCRANKTIFHVDASQSVGKIEIDTQALKVDLMSFSAHKIYGPKGIGALYVSRKPRVRLEAQMHGGGHERGMRSGTLPTHQIAAMGEAFRIAKEEMASDEVRILALRTRLLNGVNDMEEVYVNGSLENRIAGNINISFNYVEGESLVMALKDLAVSSGSACTSASLEPSYVLRAIGRDDELAHSSIRFSIGRFTTEEEIDYAINIIRKNIGRLRDMSPLWDMYKEGIDIKSIEWSH.

Residues 75 to 76, asparagine 155, glutamine 183, and 203 to 205 contribute to the pyridoxal 5'-phosphate site; these read AT and SAH. Lysine 206 is modified (N6-(pyridoxal phosphate)lysine). Threonine 243 provides a ligand contact to pyridoxal 5'-phosphate. The active-site Cysteine persulfide intermediate is cysteine 328. A [2Fe-2S] cluster-binding site is contributed by cysteine 328.

Belongs to the class-V pyridoxal-phosphate-dependent aminotransferase family. NifS/IscS subfamily. In terms of assembly, homodimer. Forms a heterotetramer with IscU, interacts with other sulfur acceptors. Requires pyridoxal 5'-phosphate as cofactor.

It is found in the cytoplasm. It carries out the reaction (sulfur carrier)-H + L-cysteine = (sulfur carrier)-SH + L-alanine. The protein operates within cofactor biosynthesis; iron-sulfur cluster biosynthesis. Its function is as follows. Master enzyme that delivers sulfur to a number of partners involved in Fe-S cluster assembly, tRNA modification or cofactor biosynthesis. Catalyzes the removal of elemental sulfur atoms from cysteine to produce alanine. Functions as a sulfur delivery protein for Fe-S cluster synthesis onto IscU, an Fe-S scaffold assembly protein, as well as other S acceptor proteins. This Psychromonas ingrahamii (strain DSM 17664 / CCUG 51855 / 37) protein is Cysteine desulfurase IscS.